A 70-amino-acid polypeptide reads, in one-letter code: DNA gyrase inhibitor YacG (70 aa).

The span at Met-1–Arg-15 shows a compositional bias: basic and acidic residues. The segment at Met-1–Glu-22 is disordered. 4 residues coordinate Zn(2+): Cys-20, Cys-23, Cys-35, and Cys-39.

This sequence belongs to the DNA gyrase inhibitor YacG family. Interacts with GyrB. Zn(2+) serves as cofactor.

In terms of biological role, inhibits all the catalytic activities of DNA gyrase by preventing its interaction with DNA. Acts by binding directly to the C-terminal domain of GyrB, which probably disrupts DNA binding by the gyrase. The chain is DNA gyrase inhibitor YacG from Rhizobium johnstonii (strain DSM 114642 / LMG 32736 / 3841) (Rhizobium leguminosarum bv. viciae).